The chain runs to 388 residues: tRNA(Ile)-lysidine synthase (388 aa).

Residue 51 to 56 (SGGRDS) coordinates ATP.

The protein belongs to the tRNA(Ile)-lysidine synthase family.

The protein resides in the cytoplasm. It catalyses the reaction cytidine(34) in tRNA(Ile2) + L-lysine + ATP = lysidine(34) in tRNA(Ile2) + AMP + diphosphate + H(+). Ligates lysine onto the cytidine present at position 34 of the AUA codon-specific tRNA(Ile) that contains the anticodon CAU, in an ATP-dependent manner. Cytidine is converted to lysidine, thus changing the amino acid specificity of the tRNA from methionine to isoleucine. This is tRNA(Ile)-lysidine synthase from Bifidobacterium longum (strain DJO10A).